Consider the following 326-residue polypeptide: PDZ domain-containing protein MAGIX (326 aa).

The disordered stretch occupies residues 1–32 (MDSHAGNTADPRGSRRGVGLQGSGSPRARQLL). The 85-residue stretch at 128–212 (SVELVRGPAG…RLCLVLQRPQ (85 aa)) folds into the PDZ domain. The tract at residues 214–267 (MNGSRSKEVGGGHQKTDRIPDPRGGRMMESRGTISPVHHRPKTRTGPGPSPESV) is disordered. Positions 218–242 (RSKEVGGGHQKTDRIPDPRGGRMME) are enriched in basic and acidic residues. Position 263 is a phosphoserine (Ser263).

The polypeptide is PDZ domain-containing protein MAGIX (Magix) (Rattus norvegicus (Rat)).